We begin with the raw amino-acid sequence, 337 residues long: Dimethyladenosine transferase 1, mitochondrial (337 aa).

A mitochondrion-targeting transit peptide spans 1–84 (MSQVTARVLN…RSILRRQPQR (84 aa)). Residues 38-41 (QNFL), Asn-39, Leu-41, Gly-67, Glu-89, Asp-118, and Asn-140 each bind S-adenosyl-L-methionine.

Belongs to the class I-like SAM-binding methyltransferase superfamily. rRNA adenine N(6)-methyltransferase family. KsgA subfamily.

It localises to the mitochondrion. In terms of biological role, probable S-adenosyl-L-methionine-dependent methyltransferase which specifically dimethylates mitochondrial 12S rRNA at the conserved stem loop. In Drosophila pseudoobscura pseudoobscura (Fruit fly), this protein is Dimethyladenosine transferase 1, mitochondrial (mtTFB1).